Reading from the N-terminus, the 429-residue chain is UDP-N-acetylglucosamine 1-carboxyvinyltransferase (429 aa).

22 to 23 provides a ligand contact to phosphoenolpyruvate; it reads KN. Arg102 provides a ligand contact to UDP-N-acetyl-alpha-D-glucosamine. Cys126 functions as the Proton donor in the catalytic mechanism. 2-(S-cysteinyl)pyruvic acid O-phosphothioketal is present on Cys126. UDP-N-acetyl-alpha-D-glucosamine-binding positions include 131–135, Asp316, and Ile338; that span reads RPVDL.

Belongs to the EPSP synthase family. MurA subfamily.

The protein localises to the cytoplasm. It catalyses the reaction phosphoenolpyruvate + UDP-N-acetyl-alpha-D-glucosamine = UDP-N-acetyl-3-O-(1-carboxyvinyl)-alpha-D-glucosamine + phosphate. The protein operates within cell wall biogenesis; peptidoglycan biosynthesis. Its function is as follows. Cell wall formation. Adds enolpyruvyl to UDP-N-acetylglucosamine. The chain is UDP-N-acetylglucosamine 1-carboxyvinyltransferase from Methylorubrum populi (strain ATCC BAA-705 / NCIMB 13946 / BJ001) (Methylobacterium populi).